The sequence spans 303 residues: tRNA pseudouridine synthase B (303 aa).

Asp38 serves as the catalytic Nucleophile.

The protein belongs to the pseudouridine synthase TruB family. Type 1 subfamily.

The catalysed reaction is uridine(55) in tRNA = pseudouridine(55) in tRNA. Its function is as follows. Responsible for synthesis of pseudouridine from uracil-55 in the psi GC loop of transfer RNAs. The polypeptide is tRNA pseudouridine synthase B (Oceanobacillus iheyensis (strain DSM 14371 / CIP 107618 / JCM 11309 / KCTC 3954 / HTE831)).